A 1295-amino-acid chain; its full sequence is Phosphoribosylformylglycinamidine synthase (1295 aa).

Residues 305 to 327 (WPGAATGSGGEIRDEGATGRGAK) are disordered. ATP is bound by residues 307–318 (GAATGSGGEIRD), 386–388 (TGY), and alanine 678. Mg(2+) is bound by residues aspartate 679, glutamate 718, asparagine 722, and aspartate 884. Position 886 (serine 886) interacts with ATP. One can recognise a Glutamine amidotransferase type-1 domain in the interval 1042 to 1295 (VAVLREQGVN…IFRNARKQLG (254 aa)). Catalysis depends on cysteine 1135, which acts as the Nucleophile. Active-site residues include histidine 1260 and glutamate 1262.

The protein in the N-terminal section; belongs to the FGAMS family. In terms of assembly, monomer.

The protein resides in the cytoplasm. It catalyses the reaction N(2)-formyl-N(1)-(5-phospho-beta-D-ribosyl)glycinamide + L-glutamine + ATP + H2O = 2-formamido-N(1)-(5-O-phospho-beta-D-ribosyl)acetamidine + L-glutamate + ADP + phosphate + H(+). The protein operates within purine metabolism; IMP biosynthesis via de novo pathway; 5-amino-1-(5-phospho-D-ribosyl)imidazole from N(2)-formyl-N(1)-(5-phospho-D-ribosyl)glycinamide: step 1/2. Its function is as follows. Phosphoribosylformylglycinamidine synthase involved in the purines biosynthetic pathway. Catalyzes the ATP-dependent conversion of formylglycinamide ribonucleotide (FGAR) and glutamine to yield formylglycinamidine ribonucleotide (FGAM) and glutamate. The chain is Phosphoribosylformylglycinamidine synthase from Salmonella typhi.